The following is a 281-amino-acid chain: Bifunctional protein FolD (281 aa).

Residues 167–169 and serine 192 each bind NADP(+); that span reads GRS.

This sequence belongs to the tetrahydrofolate dehydrogenase/cyclohydrolase family. Homodimer.

It catalyses the reaction (6R)-5,10-methylene-5,6,7,8-tetrahydrofolate + NADP(+) = (6R)-5,10-methenyltetrahydrofolate + NADPH. The enzyme catalyses (6R)-5,10-methenyltetrahydrofolate + H2O = (6R)-10-formyltetrahydrofolate + H(+). The protein operates within one-carbon metabolism; tetrahydrofolate interconversion. Its function is as follows. Catalyzes the oxidation of 5,10-methylenetetrahydrofolate to 5,10-methenyltetrahydrofolate and then the hydrolysis of 5,10-methenyltetrahydrofolate to 10-formyltetrahydrofolate. The protein is Bifunctional protein FolD of Alcanivorax borkumensis (strain ATCC 700651 / DSM 11573 / NCIMB 13689 / SK2).